The chain runs to 503 residues: MEEFKRYLELDRSQQHDFVYPLIFQEYIYALAHDHGLNRSILLENTGYDNKSSLLIVKRLITQMYQRNHLIFCANDFNQNPFFGHNTNVYSQMVLEGFAVLVEIPFSLRLISSLKGKEIVKSHNLRSIHSIFPFLEDKFSHLNYVLDILIPHSIHLEVLVQTLRYWVKDVSSLHLLRFFLHEYRNWNSLITPKKSSFSFSKRNQRLVLFLYNSHVCEYESIFVFXRXQSSHLRSISSGTFLERIYFYGKIEHFVEVFTKDFKAILWLFKDPFMHYVRYQGKFLLASKGTSLLMNKWKYYLVNFWQCYFYMWSQPGRIHRNHLSNHSLDFLGYLSSVRLNPSIVRSQMLENSFLIGNAIKKYDPIVPIIPLMGSLSKAKFCNVLGHPISKPVWSDLSDSDIIDRFGRIYRNLSHYYSGSSKKMSLYRIKYILRLSCARTLARKHKSTVRAFLKRLGSGLLEEFFTEEEQVFSLTFPKASFTSRGLYRRRIWYLDIICINDLANH.

This sequence belongs to the intron maturase 2 family. MatK subfamily.

The protein resides in the plastid. The protein localises to the chloroplast. Usually encoded in the trnK tRNA gene intron. Probably assists in splicing its own and other chloroplast group II introns. This chain is Maturase K, found in Diospyros virginiana (American persimmon).